The primary structure comprises 304 residues: Bifunctional protein FolD 3 (304 aa).

Residues 172–174 (GRS), Ser-197, and Ile-238 each bind NADP(+).

It belongs to the tetrahydrofolate dehydrogenase/cyclohydrolase family. As to quaternary structure, homodimer.

It carries out the reaction (6R)-5,10-methylene-5,6,7,8-tetrahydrofolate + NADP(+) = (6R)-5,10-methenyltetrahydrofolate + NADPH. The enzyme catalyses (6R)-5,10-methenyltetrahydrofolate + H2O = (6R)-10-formyltetrahydrofolate + H(+). Its pathway is one-carbon metabolism; tetrahydrofolate interconversion. Catalyzes the oxidation of 5,10-methylenetetrahydrofolate to 5,10-methenyltetrahydrofolate and then the hydrolysis of 5,10-methenyltetrahydrofolate to 10-formyltetrahydrofolate. The protein is Bifunctional protein FolD 3 of Rhizorhabdus wittichii (strain DSM 6014 / CCUG 31198 / JCM 15750 / NBRC 105917 / EY 4224 / RW1) (Sphingomonas wittichii).